Reading from the N-terminus, the 144-residue chain is Large ribosomal subunit protein uL15 (144 aa).

The disordered stretch occupies residues 1-52; it reads MRLNTLSPAEGAKHAPKRVGRGIGSGLGKTGGRGHKGQKSRSGGGVRRGFEG. Gly residues predominate over residues 21–31; sequence RGIGSGLGKTG.

Belongs to the universal ribosomal protein uL15 family. In terms of assembly, part of the 50S ribosomal subunit.

Binds to the 23S rRNA. This is Large ribosomal subunit protein uL15 from Buchnera aphidicola subsp. Acyrthosiphon kondoi (Acyrthosiphon kondoi symbiotic bacterium).